The chain runs to 263 residues: Complement C1q tumor necrosis factor-related protein 6 (263 aa).

Residues M1–G24 form the signal peptide. Residue N76 is glycosylated (N-linked (GlcNAc...) asparagine). The segment at L80 to S123 is disordered. One can recognise a Collagen-like domain in the interval G82 to S123. In terms of domain architecture, C1q spans C124 to N263.

The protein localises to the secreted. This chain is Complement C1q tumor necrosis factor-related protein 6 (C1qtnf6), found in Rattus norvegicus (Rat).